The chain runs to 828 residues: Periplasmic nitrate reductase (828 aa).

Positions 1-31 (MKLSRRSFMKANAVAAAAAAAGLSVPGVARA) form a signal peptide, tat-type signal. In terms of domain architecture, 4Fe-4S Mo/W bis-MGD-type spans 39 to 95 (IKWDKAPCRFCGTGCGVLVGTQQGRVVACQGDPDAPVNRGLNCIKGYFLPKIMYGKD). Residues cysteine 46, cysteine 49, cysteine 53, and cysteine 81 each coordinate [4Fe-4S] cluster. Residues lysine 83, glutamine 150, asparagine 175, cysteine 179, 212 to 219 (WGSNMAEM), 243 to 247 (STYQH), 262 to 264 (QSD), methionine 372, glutamine 376, asparagine 482, 508 to 509 (SD), lysine 531, aspartate 558, and 718 to 727 (TGRVLEHWHT) contribute to the Mo-bis(molybdopterin guanine dinucleotide) site. Phenylalanine 794 is a substrate binding site. Residues asparagine 802 and lysine 819 each contribute to the Mo-bis(molybdopterin guanine dinucleotide) site.

The protein belongs to the prokaryotic molybdopterin-containing oxidoreductase family. NasA/NapA/NarB subfamily. As to quaternary structure, component of the periplasmic nitrate reductase NapAB complex composed of NapA and NapB. [4Fe-4S] cluster serves as cofactor. It depends on Mo-bis(molybdopterin guanine dinucleotide) as a cofactor. In terms of processing, predicted to be exported by the Tat system. The position of the signal peptide cleavage has not been experimentally proven.

It localises to the periplasm. It catalyses the reaction 2 Fe(II)-[cytochrome] + nitrate + 2 H(+) = 2 Fe(III)-[cytochrome] + nitrite + H2O. Catalytic subunit of the periplasmic nitrate reductase complex NapAB. Receives electrons from NapB and catalyzes the reduction of nitrate to nitrite. The protein is Periplasmic nitrate reductase of Escherichia coli O81 (strain ED1a).